An 883-amino-acid polypeptide reads, in one-letter code: Integrator complex subunit 6-B (883 aa).

One can recognise a VWFA domain in the interval Ile-3–Ile-227. Residues Met-626–Glu-633 carry the Inhibitory loop motif.

This sequence belongs to the Integrator subunit 6 family. In terms of assembly, component of the Integrator complex, composed of core subunits INTS1, INTS2, INTS3, INTS4, INTS5, INTS6, INTS7, INTS8, INTS9/RC74, INTS10, INTS11/CPSF3L, INTS12, INTS13, INTS14 and INTS15. The core complex associates with protein phosphatase 2A subunits PPP2CA and PPP2R1A, to form the Integrator-PP2A (INTAC) complex.

Its subcellular location is the nucleus. It is found in the chromosome. Component of the integrator complex, a multiprotein complex that terminates RNA polymerase II (Pol II) transcription in the promoter-proximal region of genes. The integrator complex provides a quality checkpoint during transcription elongation by driving premature transcription termination of transcripts that are unfavorably configured for transcriptional elongation: the complex terminates transcription by (1) catalyzing dephosphorylation of the C-terminal domain (CTD) of Pol II subunit POLR2A/RPB1 and SUPT5H/SPT5, (2) degrading the exiting nascent RNA transcript via endonuclease activity and (3) promoting the release of Pol II from bound DNA. The integrator complex is also involved in terminating the synthesis of non-coding Pol II transcripts, such as enhancer RNAs (eRNAs), small nuclear RNAs (snRNAs), telomerase RNAs and long non-coding RNAs (lncRNAs). Within the integrator complex, INTS6 acts as a molecular adapter that promotes assembly of protein phosphatase 2A (PP2A) subunits to the integrator core complex, promoting recruitment of PP2A to transcription pause-release checkpoint. This is Integrator complex subunit 6-B (ints6-b) from Xenopus laevis (African clawed frog).